Here is a 392-residue protein sequence, read N- to C-terminus: Tryptophan 2,3-dioxygenase (392 aa).

Substrate contacts are provided by residues 57–61 and R128; that span reads FIVTH. H313 contributes to the heme binding site. Residue T328 coordinates substrate.

Belongs to the tryptophan 2,3-dioxygenase family. As to quaternary structure, homotetramer. Dimer of dimers. The cofactor is heme.

It carries out the reaction L-tryptophan + O2 = N-formyl-L-kynurenine. The protein operates within amino-acid degradation; L-tryptophan degradation via kynurenine pathway; L-kynurenine from L-tryptophan: step 1/2. It participates in pigment biosynthesis; ommochrome biosynthesis. Heme-dependent dioxygenase that catalyzes the oxidative cleavage of the L-tryptophan (L-Trp) pyrrole ring and converts L-tryptophan to N-formyl-L-kynurenine. Catalyzes the oxidative cleavage of the indole moiety. This chain is Tryptophan 2,3-dioxygenase, found in Anopheles gambiae (African malaria mosquito).